Here is a 235-residue protein sequence, read N- to C-terminus: 15,16-dihydrobiliverdin:ferredoxin oxidoreductase (235 aa).

It belongs to the HY2 family.

The catalysed reaction is 15,16-dihydrobiliverdin + oxidized 2[4Fe-4S]-[ferredoxin] = biliverdin IXalpha + reduced 2[4Fe-4S]-[ferredoxin] + 2 H(+). Its function is as follows. Catalyzes the two-electron reduction of biliverdin IX-alpha at the C15 methine bridge. The sequence is that of 15,16-dihydrobiliverdin:ferredoxin oxidoreductase (pebA) from Parasynechococcus marenigrum (strain WH8102).